A 226-amino-acid polypeptide reads, in one-letter code: ATP synthase F(0) complex subunit a (226 aa).

6 consecutive transmembrane segments (helical) span residues 10–30 (ITPT…PPVI), 68–88 (WSLM…LGLL), 97–117 (QLSM…ILGF), 138–158 (IPML…ALAV), 164–184 (ITAG…LTSI), and 189–209 (AMIT…VALI).

Belongs to the ATPase A chain family. In terms of assembly, component of the ATP synthase complex composed at least of ATP5F1A/subunit alpha, ATP5F1B/subunit beta, ATP5MC1/subunit c (homooctomer), MT-ATP6/subunit a, MT-ATP8/subunit 8, ATP5ME/subunit e, ATP5MF/subunit f, ATP5MG/subunit g, ATP5MK/subunit k, ATP5MJ/subunit j, ATP5F1C/subunit gamma, ATP5F1D/subunit delta, ATP5F1E/subunit epsilon, ATP5PF/subunit F6, ATP5PB/subunit b, ATP5PD/subunit d, ATP5PO/subunit OSCP. ATP synthase complex consists of a soluble F(1) head domain (subunits alpha(3) and beta(3)) - the catalytic core - and a membrane F(0) domain - the membrane proton channel (subunits c, a, 8, e, f, g, k and j). These two domains are linked by a central stalk (subunits gamma, delta, and epsilon) rotating inside the F1 region and a stationary peripheral stalk (subunits F6, b, d, and OSCP). Interacts with DNAJC30; interaction is direct.

Its subcellular location is the mitochondrion inner membrane. The catalysed reaction is H(+)(in) = H(+)(out). In terms of biological role, subunit a, of the mitochondrial membrane ATP synthase complex (F(1)F(0) ATP synthase or Complex V) that produces ATP from ADP in the presence of a proton gradient across the membrane which is generated by electron transport complexes of the respiratory chain. ATP synthase complex consist of a soluble F(1) head domain - the catalytic core - and a membrane F(1) domain - the membrane proton channel. These two domains are linked by a central stalk rotating inside the F(1) region and a stationary peripheral stalk. During catalysis, ATP synthesis in the catalytic domain of F(1) is coupled via a rotary mechanism of the central stalk subunits to proton translocation. With the subunit c (ATP5MC1), forms the proton-conducting channel in the F(0) domain, that contains two crucial half-channels (inlet and outlet) that facilitate proton movement from the mitochondrial intermembrane space (IMS) into the matrix. Protons are taken up via the inlet half-channel and released through the outlet half-channel, following a Grotthuss mechanism. The sequence is that of ATP synthase F(0) complex subunit a from Cricetulus griseus (Chinese hamster).